Consider the following 1187-residue polypeptide: DENN domain and WD repeat-containing protein SCD1 (1187 aa).

Residues 19 to 179 enclose the uDENN domain; the sequence is TVDGDLGFHG…NVPLPTPGKD (161 aa). Positions 199–330 constitute a cDENN domain; it reads SLPQADISLQ…EFSTLRNDIL (132 aa). The region spanning 332 to 437 is the dDENN domain; sequence LLHPNVVAID…ERRLSSDEKS (106 aa). 2 disordered regions span residues 508–536 and 765–793; these read SGAL…SSME and SAGL…GRSW. The span at 526–536 shows a compositional bias: basic and acidic residues; the sequence is NTKEDNFSSME. A compositionally biased stretch (polar residues) spans 779–793; the sequence is SDETQQPSEASGRSW. WD repeat units follow at residues 841–892, 897–934, 937–975, 978–1017, 1020–1057, 1060–1099, 1104–1141, and 1152–1187; these read GHGG…SELR, GHTG…LLEE, GHDS…CVAT, RCSS…QMHK, GHTK…CDAV, CHAG…IKCV, LHSS…GTKV, and RTAA…TINI.

As to quaternary structure, interacts with FLS2. Expressed in roots, rosette and cauline leaves, buds and flowers.

It localises to the cell membrane. The protein resides in the cytoplasmic vesicle. The protein localises to the clathrin-coated vesicle. Its function is as follows. Involved in growth and development through its role in cytokinesis and polarized cell expansion. Required for plasma membrane internalization. May function in clathrin-mediated membrane trafficking, including plasma membrane endocytosis, essential to both cytokinesis and cell expansion. Acts as a negative regulator of basal resistance against bacteria. This is DENN domain and WD repeat-containing protein SCD1 from Arabidopsis thaliana (Mouse-ear cress).